Reading from the N-terminus, the 781-residue chain is Phenylalanine--tRNA ligase beta subunit (781 aa).

One can recognise a tRNA-binding domain in the interval 39–147 (APPFNDVVVA…DDAPVGEDLR (109 aa)). The 76-residue stretch at 398–473 (PRREPIELRL…RLFGYDRIPA (76 aa)) folds into the B5 domain. Asp-451, Asp-457, Glu-460, and Glu-461 together coordinate Mg(2+). The FDX-ACB domain occupies 687–780 (SRFPQVRRDL…AARRCSATLR (94 aa)).

Belongs to the phenylalanyl-tRNA synthetase beta subunit family. Type 1 subfamily. In terms of assembly, tetramer of two alpha and two beta subunits. Requires Mg(2+) as cofactor.

It localises to the cytoplasm. It catalyses the reaction tRNA(Phe) + L-phenylalanine + ATP = L-phenylalanyl-tRNA(Phe) + AMP + diphosphate + H(+). The chain is Phenylalanine--tRNA ligase beta subunit from Thiobacillus denitrificans (strain ATCC 25259 / T1).